Reading from the N-terminus, the 357-residue chain is tRNA/tmRNA (uracil-C(5))-methyltransferase (357 aa).

The S-adenosyl-L-methionine site is built by Gln-180, Tyr-209, Asn-214, Glu-230, and Asp-290. Cys-315 acts as the Nucleophile in catalysis. Glu-349 acts as the Proton acceptor in catalysis.

Belongs to the class I-like SAM-binding methyltransferase superfamily. RNA M5U methyltransferase family. TrmA subfamily.

It catalyses the reaction uridine(54) in tRNA + S-adenosyl-L-methionine = 5-methyluridine(54) in tRNA + S-adenosyl-L-homocysteine + H(+). It carries out the reaction uridine(341) in tmRNA + S-adenosyl-L-methionine = 5-methyluridine(341) in tmRNA + S-adenosyl-L-homocysteine + H(+). Functionally, dual-specificity methyltransferase that catalyzes the formation of 5-methyluridine at position 54 (m5U54) in all tRNAs, and that of position 341 (m5U341) in tmRNA (transfer-mRNA). In Campylobacter jejuni (strain RM1221), this protein is tRNA/tmRNA (uracil-C(5))-methyltransferase.